We begin with the raw amino-acid sequence, 74 residues long: Kappa-scoloptoxin(07)-Ssm2f (74 aa).

The signal sequence occupies residues methionine 1–glycine 19. Residues alanine 20–asparagine 41 constitute a propeptide that is removed on maturation.

Belongs to the scoloptoxin-07 family. Post-translationally, contains 3 disulfide bonds. As to expression, expressed by the venom gland.

Its subcellular location is the secreted. Its function is as follows. Inhibits voltage-gated potassium channels. This is Kappa-scoloptoxin(07)-Ssm2f from Scolopendra mutilans (Chinese red-headed centipede).